The sequence spans 211 residues: Mediator of RNA polymerase II transcription subunit 20 (211 aa).

Belongs to the Mediator complex subunit 20 family. Component of the Mediator complex.

The protein localises to the nucleus. In terms of biological role, component of the Mediator complex, a coactivator involved in the regulated transcription of nearly all RNA polymerase II-dependent genes. Mediator functions as a bridge to convey information from gene-specific regulatory proteins to the basal RNA polymerase II transcription machinery. Mediator is recruited to promoters by direct interactions with regulatory proteins and serves as a scaffold for the assembly of a functional preinitiation complex with RNA polymerase II and the general transcription factors. The chain is Mediator of RNA polymerase II transcription subunit 20 (med20) from Xenopus laevis (African clawed frog).